Consider the following 334-residue polypeptide: Procathepsin L (334 aa).

The signal sequence occupies residues 1–17 (MNLLLLLAVLCLGTALA). Residues 18–113 (TPKFDQTFSA…RLFQEPLMLK (96 aa)) constitute a propeptide, activation peptide. Glutamate 122 contributes to the Zn(2+) binding site. Disulfide bonds link cysteine 135–cysteine 178 and cysteine 169–cysteine 211. Cysteine 138 is a catalytic residue. Residues glutamate 163, aspartate 184, glutamate 199, and glutamate 205 each coordinate Zn(2+). Asparagine 221 carries an N-linked (GlcNAc...) (high mannose) asparagine glycan. Zn(2+) is bound by residues aspartate 227, aspartate 250, histidine 253, and aspartate 275. An intrachain disulfide couples cysteine 269 to cysteine 322. The active site involves histidine 276. The propeptide occupies 289–290 (DS). Asparagine 300 is an active-site residue.

Belongs to the peptidase C1 family. Dimer of a heavy and a light chain linked by disulfide bonds. Interacts with Long isoform of CD74/Ii chain; the interaction stabilizes the conformation of mature CTSL. During export along the endocytic pathway, pro-CTSL undergoes several proteolytic cleavages to generate the CTSL single-chain and two-chain mature forms, composed of a heavy chain linked to a light chain by disulfide bonds. Autocleavage; produces the single-chain CTSL after cleavage of the propeptide. The cleavage can be intermolecular. In terms of tissue distribution, expressed in thymus, kidney and liver. Expressed in thyroid epithelial cells. Expressed in cortical thymic epithelial cells. Expressed by antigen presenting cells (APCs) such as dendritic cells and macrophages.

The protein localises to the lysosome. The protein resides in the apical cell membrane. Its subcellular location is the secreted. It localises to the extracellular space. It is found in the cytoplasmic vesicle. The protein localises to the secretory vesicle. The protein resides in the chromaffin granule. It catalyses the reaction Specificity close to that of papain. As compared to cathepsin B, cathepsin L exhibits higher activity toward protein substrates, but has little activity on Z-Arg-Arg-NHMec, and no peptidyl-dipeptidase activity.. With respect to regulation, long isoform of CD74/Ii chain stabilizes the conformation of mature CTSL by binding to its active site and serving as a chaperone to help maintain a pool of mature enzyme in endocytic compartments and extracellular space of APCs. IFNG enhances the conversion into the CTSL mature and active form. Inhibited by CST6. Inhibited by the glycopeptide antibiotic teicoplanin. Inhibited by amantadine. In terms of biological role, thiol protease important for the overall degradation of proteins in lysosomes. Involved in the solubilization of cross-linked TG/thyroglobulin and in the subsequent release of thyroid hormone thyroxine (T4) by limited proteolysis of TG/thyroglobulin in the thyroid follicle lumen. In neuroendocrine chromaffin cells secretory vesicles, catalyzes the prohormone proenkephalin processing to the active enkephalin peptide neurotransmitter. In thymus, regulates CD4(+) T cell positive selection by generating the major histocompatibility complex class II (MHCII) bound peptide ligands presented by cortical thymic epithelial cells. Also mediates invariant chain processing in cortical thymic epithelial cells. Major elastin-degrading enzyme at neutral pH. Accumulates as a mature and active enzyme in the extracellular space of antigen presenting cells (APCs) to regulate degradation of the extracellular matrix in the course of inflammation. Secreted form generates endostatin from COL18A1. Critical for cardiac morphology and function. Plays an important role in hair follicle morphogenesis and cycling, as well as epidermal differentiation. Required for maximal stimulation of steroidogenesis by TIMP1. The sequence is that of Procathepsin L from Mus musculus (Mouse).